The sequence spans 296 residues: 4-hydroxy-tetrahydrodipicolinate synthase (296 aa).

Thr49 is a pyruvate binding site. Tyr137 acts as the Proton donor/acceptor in catalysis. Catalysis depends on Lys166, which acts as the Schiff-base intermediate with substrate. Ile208 is a binding site for pyruvate.

The protein belongs to the DapA family. In terms of assembly, homotetramer; dimer of dimers.

Its subcellular location is the cytoplasm. It catalyses the reaction L-aspartate 4-semialdehyde + pyruvate = (2S,4S)-4-hydroxy-2,3,4,5-tetrahydrodipicolinate + H2O + H(+). It functions in the pathway amino-acid biosynthesis; L-lysine biosynthesis via DAP pathway; (S)-tetrahydrodipicolinate from L-aspartate: step 3/4. In terms of biological role, catalyzes the condensation of (S)-aspartate-beta-semialdehyde [(S)-ASA] and pyruvate to 4-hydroxy-tetrahydrodipicolinate (HTPA). The polypeptide is 4-hydroxy-tetrahydrodipicolinate synthase (Chlorobium chlorochromatii (strain CaD3)).